The primary structure comprises 325 residues: Probable siderophore-binding lipoprotein YfiY (325 aa).

The N-terminal stretch at 1-20 (MKKHISMLFVFLMAVMVLSA) is a signal peptide. Cys21 is lipidated: N-palmitoyl cysteine. Cys21 carries S-diacylglycerol cysteine lipidation. The 270-residue stretch at 56 to 325 (RIVVLTNEGT…DIETYFLKTK (270 aa)) folds into the Fe/B12 periplasmic-binding domain. Phosphoserine is present on Ser290. Phosphothreonine is present on Thr302.

Belongs to the bacterial solute-binding protein 8 family. As to quaternary structure, the complex is composed of one ATP-binding protein (YusV), two transmembrane proteins (YfiZ and YfhA) and a solute-binding protein (YfiY). Interacts with FloT.

Its subcellular location is the cell membrane. The protein resides in the cytoplasm. The protein localises to the membrane raft. Functionally, part of the ABC transporter complex YfiYZ/YfhA/YusV involved in import of the iron-hydroxamate siderophores schizokinen, arthrobactin and corprogen. Binds the siderophores and delivers them to the surface of YfiZ/YfhA. This is Probable siderophore-binding lipoprotein YfiY (yfiY) from Bacillus subtilis (strain 168).